Here is a 177-residue protein sequence, read N- to C-terminus: Thymidine kinase (177 aa).

11–18 (GPMFSGKS) is a binding site for ATP. E83 acts as the Proton acceptor in catalysis. F113 contributes to the substrate binding site. 2 residues coordinate Zn(2+): C138 and C141. 157 to 161 (IEIIG) serves as a coordination point for substrate. Zn(2+) is bound by residues C170 and C173.

The protein belongs to the thymidine kinase family. Homotetramer. Two molecules of substrate bind to each enzyme tetramer.

The enzyme catalyses thymidine + ATP = dTMP + ADP + H(+). Its function is as follows. Phosphorylates thymidine and thymidine analogs, such as azidothymidine (AZT). Part of the salvage pathway for pyrimidine deoxyribonucleotide synthesis. The polypeptide is Thymidine kinase (OPG101) (Vaccinia virus (strain Tian Tan) (VACV)).